The following is a 105-amino-acid chain: Ig lambda chain C region (105 aa).

An Ig-like domain is found at 2 to 100 (PKAAPTVNLF…EGTIVEKTVT (99 aa)). C27 and C86 are joined by a disulfide.

The chain is Ig lambda chain C region from Sus scrofa (Pig).